The chain runs to 319 residues: Methionyl-tRNA formyltransferase (319 aa).

116–119 (SLLP) is a (6S)-5,6,7,8-tetrahydrofolate binding site.

It belongs to the Fmt family.

The catalysed reaction is L-methionyl-tRNA(fMet) + (6R)-10-formyltetrahydrofolate = N-formyl-L-methionyl-tRNA(fMet) + (6S)-5,6,7,8-tetrahydrofolate + H(+). Functionally, attaches a formyl group to the free amino group of methionyl-tRNA(fMet). The formyl group appears to play a dual role in the initiator identity of N-formylmethionyl-tRNA by promoting its recognition by IF2 and preventing the misappropriation of this tRNA by the elongation apparatus. In Treponema pallidum (strain Nichols), this protein is Methionyl-tRNA formyltransferase.